The chain runs to 638 residues: ATP-dependent zinc metalloprotease FtsH (638 aa).

Residues 1 to 7 (MRSTYKT) lie on the Cytoplasmic side of the membrane. The helical transmembrane segment at 8 to 28 (IGLWVILIVLFVAFYNFFSQG) threads the bilayer. Residues 29-102 (NDQVQEPSFT…KYEREEQNSL (74 aa)) lie on the Periplasmic side of the membrane. Residues 103 to 123 (WLTILGQWMPVVFLFLFFIFF) form a helical membrane-spanning segment. Residues 124–638 (MRQLQGGSGK…GLPAMEPKKA (515 aa)) lie on the Cytoplasmic side of the membrane. An ATP-binding site is contributed by 195–202 (GSPGTGKT). His417 lines the Zn(2+) pocket. The active site involves Glu418. Zn(2+) is bound by residues His421 and Asp493. Residues 596–638 (GGQLTRERPPPRVNAPPKATEKKDKRKILDALEGLPAMEPKKA) form a disordered region. Basic and acidic residues predominate over residues 614–625 (ATEKKDKRKILD).

The protein in the central section; belongs to the AAA ATPase family. This sequence in the C-terminal section; belongs to the peptidase M41 family. In terms of assembly, homohexamer. Zn(2+) is required as a cofactor.

It is found in the cell inner membrane. Acts as a processive, ATP-dependent zinc metallopeptidase for both cytoplasmic and membrane proteins. Plays a role in the quality control of integral membrane proteins. The protein is ATP-dependent zinc metalloprotease FtsH of Myxococcus xanthus (strain DK1622).